A 436-amino-acid chain; its full sequence is 3-ketoacyl-CoA thiolase (436 aa).

The active-site Acyl-thioester intermediate is the Cys99. Active-site proton acceptor residues include His392 and Cys422.

The protein belongs to the thiolase-like superfamily. Thiolase family. Heterotetramer of two alpha chains (FadJ) and two beta chains (FadI).

It is found in the cytoplasm. It catalyses the reaction an acyl-CoA + acetyl-CoA = a 3-oxoacyl-CoA + CoA. It participates in lipid metabolism; fatty acid beta-oxidation. In terms of biological role, catalyzes the final step of fatty acid oxidation in which acetyl-CoA is released and the CoA ester of a fatty acid two carbons shorter is formed. The sequence is that of 3-ketoacyl-CoA thiolase from Cronobacter sakazakii (strain ATCC BAA-894) (Enterobacter sakazakii).